Here is a 259-residue protein sequence, read N- to C-terminus: Tryptophan synthase alpha chain (259 aa).

Active-site proton acceptor residues include Glu-52 and Asp-63.

Belongs to the TrpA family. As to quaternary structure, tetramer of two alpha and two beta chains.

It carries out the reaction (1S,2R)-1-C-(indol-3-yl)glycerol 3-phosphate + L-serine = D-glyceraldehyde 3-phosphate + L-tryptophan + H2O. It functions in the pathway amino-acid biosynthesis; L-tryptophan biosynthesis; L-tryptophan from chorismate: step 5/5. In terms of biological role, the alpha subunit is responsible for the aldol cleavage of indoleglycerol phosphate to indole and glyceraldehyde 3-phosphate. The protein is Tryptophan synthase alpha chain of Streptococcus gordonii (strain Challis / ATCC 35105 / BCRC 15272 / CH1 / DL1 / V288).